The following is a 498-amino-acid chain: Capsanthin/capsorubin synthase, chromoplastic (498 aa).

A chromoplast-targeting transit peptide spans 1 to 52 (METLLKPFPSPLLSIPTPNMYSFKHNSTFPNPTKQKDSRKFHYRNKSSTHFC). 84–112 (VIIIGTGPAGLRLAEQVSKYGIKVCCVDP) contributes to the NAD(+) binding site. Residues 293 to 297 (FLEET) carry the FLEET motif motif.

Belongs to the lycopene cyclase family. In terms of assembly, monomer. FAD serves as cofactor. NADPH is required as a cofactor.

Its subcellular location is the plastid. The protein localises to the chromoplast. It carries out the reaction all-trans-violaxanthin = all-trans-capsorubin. The catalysed reaction is all-trans-antheraxanthin = all-trans-capsanthin. It catalyses the reaction all-trans-violaxanthin = (5R,6S)-5,6-epoxi-capsanthin. The enzyme catalyses (5R,6S)-5,6-epoxi-capsanthin = all-trans-capsorubin. It functions in the pathway carotenoid biosynthesis; capsanthin biosynthesis; capsanthin from antheraxanthin: step 1/1. Its pathway is carotenoid biosynthesis; capsorubin biosynthesis; capsorubin from violaxanthin: step 1/1. In terms of biological role, catalyzes the conversion of the ubiquitous 5,6-epoxycarotenoids, antheraxanthin and violaxanthin, into capsanthin and capsorubin, respectively. This Capsicum annuum (Capsicum pepper) protein is Capsanthin/capsorubin synthase, chromoplastic.